The sequence spans 703 residues: Calpain-8 (703 aa).

Positions Leu45–Ser344 constitute a Calpain catalytic domain. Active-site residues include Cys105, His262, and Asn286. Positions Trp356–Ala379 are domain III. 3 EF-hand domains span residues Phe575 to Tyr610, Asp618 to Thr640, and Ile670 to Val703. Ca(2+) is bound by residues Asp588, Asn590, Thr592, Thr594, Glu599, Asp618, Asn620, Ser622, Thr624, and Glu629.

Belongs to the peptidase C2 family. Monomer and homooligomer. Interacts with COPS1/GPS1, COPB1, EYA2, NME2, NME4 and TOMM70. The cofactor is Ca(2+). In terms of processing, undergoes autolytic cleavage between Ala-5 and Ala-6 which gives rise to fragments extending from Ala-6 to the C-terminus, Ala-6 to the EF-hand 2 domain and from Ala-6 to the beginning of domain III. As to expression, stomach.

It localises to the cytoplasm. The protein resides in the golgi apparatus. The catalysed reaction is Broad endopeptidase specificity.. Functionally, calcium-regulated non-lysosomal thiol-protease. Involved in membrane trafficking in the gastric surface mucus cells (pit cells) and may involve the membrane trafficking of mucus cells via interactions with coat protein. Proteolytically cleaves the beta-subunit of coatomer complex. This chain is Calpain-8 (CAPN8), found in Homo sapiens (Human).